Consider the following 887-residue polypeptide: Translation initiation factor IF-2 (887 aa).

The interval 1–259 is disordered; that stretch reads MSDEQDQGET…KVGDDRRRGA (259 aa). Over residues 62 to 94 the composition is skewed to low complexity; the sequence is GRPSAPSRASGGAAAPRGLTAAEQAARQRAVVE. 2 stretches are compositionally biased toward basic and acidic residues: residues 95–111 and 119–158; these read QQRE…EQEK and EEAR…RRAA. Low complexity predominate over residues 159 to 210; that stretch reads EASQATAAPPAPAAAASPRAAMPAPTAAPARPGAAPARRTAPVPPATSASET. The segment covering 250–259 has biased composition (basic and acidic residues); that stretch reads KVGDDRRRGA. Residues 386–556 form the tr-type G domain; sequence VRPPVVTIMG…LLQAELLDLK (171 aa). The segment at 395–402 is G1; that stretch reads GHVDHGKT. 395–402 is a binding site for GTP; sequence GHVDHGKT. The interval 420–424 is G2; that stretch reads GITQH. The G3 stretch occupies residues 442–445; the sequence is DTPG. Residues 442-446 and 496-499 each bind GTP; these read DTPGH and NKID. The tract at residues 496-499 is G4; sequence NKID. Positions 532–534 are G5; it reads SAL.

The protein belongs to the TRAFAC class translation factor GTPase superfamily. Classic translation factor GTPase family. IF-2 subfamily.

It localises to the cytoplasm. In terms of biological role, one of the essential components for the initiation of protein synthesis. Protects formylmethionyl-tRNA from spontaneous hydrolysis and promotes its binding to the 30S ribosomal subunits. Also involved in the hydrolysis of GTP during the formation of the 70S ribosomal complex. This Acidiphilium cryptum (strain JF-5) protein is Translation initiation factor IF-2.